We begin with the raw amino-acid sequence, 356 residues long: UDP-N-acetylglucosamine--N-acetylmuramyl-(pentapeptide) pyrophosphoryl-undecaprenol N-acetylglucosamine transferase (356 aa).

UDP-N-acetyl-alpha-D-glucosamine is bound by residues 15–17, asparagine 127, arginine 163, serine 191, isoleucine 244, 263–268, and glutamine 288; these read TGG and ALTVSE.

Belongs to the glycosyltransferase 28 family. MurG subfamily.

The protein localises to the cell inner membrane. The enzyme catalyses di-trans,octa-cis-undecaprenyl diphospho-N-acetyl-alpha-D-muramoyl-L-alanyl-D-glutamyl-meso-2,6-diaminopimeloyl-D-alanyl-D-alanine + UDP-N-acetyl-alpha-D-glucosamine = di-trans,octa-cis-undecaprenyl diphospho-[N-acetyl-alpha-D-glucosaminyl-(1-&gt;4)]-N-acetyl-alpha-D-muramoyl-L-alanyl-D-glutamyl-meso-2,6-diaminopimeloyl-D-alanyl-D-alanine + UDP + H(+). The protein operates within cell wall biogenesis; peptidoglycan biosynthesis. Its function is as follows. Cell wall formation. Catalyzes the transfer of a GlcNAc subunit on undecaprenyl-pyrophosphoryl-MurNAc-pentapeptide (lipid intermediate I) to form undecaprenyl-pyrophosphoryl-MurNAc-(pentapeptide)GlcNAc (lipid intermediate II). This is UDP-N-acetylglucosamine--N-acetylmuramyl-(pentapeptide) pyrophosphoryl-undecaprenol N-acetylglucosamine transferase from Yersinia pseudotuberculosis serotype O:1b (strain IP 31758).